A 206-amino-acid polypeptide reads, in one-letter code: GTP cyclohydrolase 1 (206 aa).

C95, H98, and C166 together coordinate Zn(2+).

It belongs to the GTP cyclohydrolase I family. Toroid-shaped homodecamer, composed of two pentamers of five dimers.

The enzyme catalyses GTP + H2O = 7,8-dihydroneopterin 3'-triphosphate + formate + H(+). It participates in cofactor biosynthesis; 7,8-dihydroneopterin triphosphate biosynthesis; 7,8-dihydroneopterin triphosphate from GTP: step 1/1. The polypeptide is GTP cyclohydrolase 1 (Bartonella quintana (strain Toulouse) (Rochalimaea quintana)).